A 448-amino-acid polypeptide reads, in one-letter code: Phosphoglucosamine mutase (448 aa).

The Phosphoserine intermediate role is filled by S104. 4 residues coordinate Mg(2+): S104, D245, D247, and D249. S104 is subject to Phosphoserine.

This sequence belongs to the phosphohexose mutase family. Requires Mg(2+) as cofactor. Activated by phosphorylation.

The catalysed reaction is alpha-D-glucosamine 1-phosphate = D-glucosamine 6-phosphate. In terms of biological role, catalyzes the conversion of glucosamine-6-phosphate to glucosamine-1-phosphate. The protein is Phosphoglucosamine mutase of Caulobacter vibrioides (strain ATCC 19089 / CIP 103742 / CB 15) (Caulobacter crescentus).